Here is a 298-residue protein sequence, read N- to C-terminus: Protease HtpX homolog (298 aa).

Helical transmembrane passes span 14–34 and 39–59; these read VVLL…AGYL and YAMG…SMIF. Zn(2+) is bound at residue His143. The active site involves Glu144. His147 contributes to the Zn(2+) binding site. The next 2 helical transmembrane spans lie at 158-178 and 197-217; these read IAVA…RMLW and IITL…ASLI. Glu226 provides a ligand contact to Zn(2+).

This sequence belongs to the peptidase M48B family. Zn(2+) is required as a cofactor.

Its subcellular location is the cell membrane. In Streptococcus pyogenes serotype M3 (strain SSI-1), this protein is Protease HtpX homolog.